A 21-amino-acid chain; its full sequence is Outer membrane protein P2 (21 aa).

In terms of assembly, disulfide bond interactions within and between MOMP molecules and other components form high molecular-weight oligomers.

It localises to the cell outer membrane. Its function is as follows. Structural rigidity of the outer membrane of elementary bodies and porin forming, permitting diffusion of solutes through the intracellular reticulate body membrane. Binds carcinoembryonic antigen (CEA). This is Outer membrane protein P2 from Glaesserella parasuis (Haemophilus parasuis).